Consider the following 63-residue polypeptide: DNA gyrase inhibitor YacG (63 aa).

Residues C9, C12, C28, and C32 each contribute to the Zn(2+) site.

It belongs to the DNA gyrase inhibitor YacG family. In terms of assembly, interacts with GyrB. Zn(2+) serves as cofactor.

Its function is as follows. Inhibits all the catalytic activities of DNA gyrase by preventing its interaction with DNA. Acts by binding directly to the C-terminal domain of GyrB, which probably disrupts DNA binding by the gyrase. This is DNA gyrase inhibitor YacG from Salmonella paratyphi A (strain AKU_12601).